The primary structure comprises 142 residues: Centromere protein S (142 aa).

The disordered stretch occupies residues 107–142 (LKGKAKKKRKPEDESRSSRESMAEELDGAEELQSES). The span at 116 to 128 (KPEDESRSSRESM) shows a compositional bias: basic and acidic residues. Positions 129–142 (AEELDGAEELQSES) are enriched in acidic residues.

The protein belongs to the TAF9 family. CENP-S/MHF1 subfamily. In terms of assembly, heterodimer with CENPX, sometimes called MHF; this interaction stabilizes both partners. MHF heterodimers can assemble to form tetrameric structures. MHF also coassemble with CENPT-CENPW heterodimers at centromeres to form the tetrameric CENP-T-W-S-X complex. Forms a discrete complex with FANCM and CENPX, called FANCM-MHF; this interaction, probably mediated by direct binding between CENPS and FANCM, leads to synergistic activation of double-stranded DNA binding and strongly stimulates FANCM-mediated DNA remodeling. Recruited by FANCM to the Fanconi anemia (FA) core complex, which consists of CENPS, CENPX, FANCA, FANCB, FANCC, FANCE, FANCF, FANCG, FANCL, FANCM, FAAP24 and FAAP100. The FA core complex associates with Bloom syndrome (BLM) complex, which consists of at least BLM, DNA topoisomerase 3-alpha (TOP3A), RMI1/BLAP75, RPA1/RPA70 and RPA2/RPA32. The super complex between FA and BLM is called BRAFT. Component of the CENPA-CAD complex, composed of CENPI, CENPK, CENPL, CENPO, CENPP, CENPQ, CENPR and CENPS. The CENPA-CAD complex is probably recruited on centromeres by the CENPA-NAC complex, at least composed of CENPA, CENPC, CENPH, CENPM, CENPN, CENPT and CENPU.

It is found in the nucleus. The protein resides in the chromosome. Its subcellular location is the centromere. It localises to the kinetochore. DNA-binding component of the Fanconi anemia (FA) core complex. Required for the normal activation of the FA pathway, leading to monoubiquitination of the FANCI-FANCD2 complex in response to DNA damage, cellular resistance to DNA cross-linking drugs, and prevention of chromosomal breakage. In complex with CENPX (MHF heterodimer), crucial cofactor for FANCM in both binding and ATP-dependent remodeling of DNA. Stabilizes FANCM. In complex with CENPX and FANCM (but not other FANC proteins), rapidly recruited to blocked forks and promotes gene conversion at blocked replication forks. In complex with CENPT, CENPW and CENPX (CENP-T-W-S-X heterotetramer), involved in the formation of a functional kinetochore outer plate, which is essential for kinetochore-microtubule attachment and faithful mitotic progression. As a component of MHF and CENP-T-W-S-X complexes, binds DNA and bends it to form a nucleosome-like structure. DNA-binding function is fulfilled in the presence of CENPX, with the following preference for DNA substates: Holliday junction &gt; double-stranded &gt; splay arm &gt; single-stranded. Does not bind DNA on its own. This chain is Centromere protein S (Cenps), found in Mus musculus (Mouse).